The following is a 517-amino-acid chain: Pentatricopeptide repeat-containing protein At1g77360, mitochondrial (517 aa).

The transit peptide at 1-59 (MKRFRIRSVDFRQLVNFFSFMRWECSSSATVWVRFNMTIRIINRQSRFCCKSFLSARLY) directs the protein to the mitochondrion. PPR repeat units lie at residues 133-163 (SVRA…MRKK), 167-201 (NVET…DLPP), 202-232 (NLVA…MRDR), 236-270 (DSKT…GCHP), 271-305 (DIVT…ICKP), 306-340 (TTFI…GMKA), 341-375 (DVAV…GVTP), 376-406 (NSKS…MIKV), 410-444 (DADT…GVFP), and 445-479 (SMHT…GIRP).

Belongs to the PPR family. P subfamily.

The protein resides in the mitochondrion. The chain is Pentatricopeptide repeat-containing protein At1g77360, mitochondrial from Arabidopsis thaliana (Mouse-ear cress).